Here is a 235-residue protein sequence, read N- to C-terminus: Secretory carrier-associated membrane protein 5A (235 aa).

The Cytoplasmic portion of the chain corresponds to 1-39 (MSDKPNNFPPLPRFIPLKPCFYQDFDTDIPDLHRTTAKR). The helical transmembrane segment at 40-60 (LYYLWMLNSITLGVNLIGCLA) threads the bilayer. The Extracellular portion of the chain corresponds to 61–67 (WLIGGGS). Residues 68–88 (ATNFGLAFLWLILFTPCSYVC) form a helical membrane-spanning segment. The Cytoplasmic segment spans residues 89-102 (WFRPIYKAFKTDSS). A helical transmembrane segment spans residues 103–125 (FNFMAFFFTFTAQLVISIIQAVG). Topologically, residues 126–148 (IPGWGVCGWIASISFFGTNVGSA) are extracellular. A helical transmembrane segment spans residues 149–169 (VVMLIPTIMFTAVAVLSFVAL). Over 170 to 235 (TKVHRFYRGA…TPNYGYSNEM (66 aa)) the chain is Cytoplasmic.

This sequence belongs to the SCAMP family. SCAMP5 subfamily.

The protein localises to the cell membrane. The protein resides in the golgi apparatus membrane. Its subcellular location is the golgi apparatus. It localises to the trans-Golgi network membrane. It is found in the recycling endosome membrane. The protein localises to the cytoplasmic vesicle. The protein resides in the secretory vesicle. Its subcellular location is the synaptic vesicle membrane. Its function is as follows. Required for the calcium-dependent exocytosis of signal sequence-containing cytokines. Probably acts in cooperation with the SNARE machinery. This chain is Secretory carrier-associated membrane protein 5A (scamp5-a), found in Xenopus laevis (African clawed frog).